A 633-amino-acid chain; its full sequence is Probable potassium transport system protein Kup (633 aa).

A run of 12 helical transmembrane segments spans residues 21-41, 61-81, 112-132, 149-169, 176-196, 217-237, 258-278, 290-310, 348-368, 377-397, 398-418, and 430-450; these read MLVA…LYTL, ILSL…MMFV, LLVV…MITP, GIDH…FLIQ, IGIL…ALGV, FFMV…LALT, WFLL…ALLL, LLAP…ATVI, IYIG…VIGF, AYGV…SAVM, LLLW…FLLV, and IVQG…LMTT.

The protein belongs to the HAK/KUP transporter (TC 2.A.72) family.

The protein resides in the cell inner membrane. The catalysed reaction is K(+)(in) + H(+)(in) = K(+)(out) + H(+)(out). Functionally, transport of potassium into the cell. Likely operates as a K(+):H(+) symporter. In Pseudomonas fluorescens (strain Pf0-1), this protein is Probable potassium transport system protein Kup.